The chain runs to 1030 residues: Protein KRBA1 (1030 aa).

Disordered regions lie at residues 27–56 (EPGR…GQPR), 80–208 (KGAM…NSPL), 225–255 (HPET…GSPP), 281–505 (EAQD…GLEN), and 634–788 (GGPS…PASS). At S101 the chain carries Phosphoserine. Residues 102–114 (PEAAAAREPCPLR) are compositionally biased toward low complexity. A compositionally biased stretch (polar residues) spans 124–143 (PTSQPHLATTPTDSSCSSGP). Residues 157–168 (TADKPWPTRKEG) show a composition bias toward basic and acidic residues. A phosphoserine mark is found at S177, S182, S184, S229, S253, and S355. The span at 372–389 (PEAQAASASSSPLEALEA) shows a compositional bias: low complexity. Positions 397–418 (NGSSPSQLPPTSCSQNPQPGDS) are enriched in polar residues. Residues 419–437 (RSQKPELQPHRSHSEEATR) are compositionally biased toward basic and acidic residues. Composition is skewed to low complexity over residues 485–502 (QGQH…PLQG) and 642–651 (PGSSSSFSGS). Positions 654-674 (EDPRPEPDLWKPLPQERDRLP) are enriched in basic and acidic residues. A compositionally biased stretch (gly residues) spans 689–698 (TPAGSSGGSP). A compositionally biased stretch (pro residues) spans 760–784 (QGPPELPSESPPPELPPPEAAPPVL). The stretch at 799–832 (LQQELHSLGAALAEKLDRLATALAGLAQEVATMR) forms a coiled coil. Positions 870–887 (RHLPYWRQKGPTRPKPKI) are enriched in basic residues. Residues 870–1030 (RHLPYWRQKG…EHRDPRWGAH (161 aa)) form a disordered region. Pro residues predominate over residues 913-923 (PLPPDAPPAEP). Composition is skewed to low complexity over residues 929–953 (SSSQ…LLAH) and 966–984 (PAAL…ADAD). Residues 1019–1030 (GGEHRDPRWGAH) show a composition bias toward basic and acidic residues.

As to expression, expressed in brain (cerebellum).

In Homo sapiens (Human), this protein is Protein KRBA1 (KRBA1).